Here is a 504-residue protein sequence, read N- to C-terminus: WD repeat-containing protein 55 homolog (504 aa).

The segment covering 32 to 49 (QEVVNESDSEIGEYDLGD) has biased composition (acidic residues). Residues 32 to 135 (QEVVNESDSE…NAFDMDEDDE (104 aa)) are disordered. Residues 66–76 (DSISSDGSFNP) show a composition bias toward polar residues. Residues 77 to 95 (NDEDSDTDSDDSMLDEPDE) are compositionally biased toward acidic residues. The segment covering 114-124 (SGSSNRNQDSD) has biased composition (polar residues). 6 WD repeats span residues 158–197 (KLED…NKLL), 202–241 (VHAK…LKKL), 245–283 (AHDD…SIFE), 286–325 (EIED…LYVQ), 328–367 (PYEE…YHCD), and 412–451 (QHNM…DFGD). Residues 484 to 504 (AKEDNNDNENDDATAGPSNTT) form a disordered region.

It belongs to the WD repeat WDR55 family.

This is WD repeat-containing protein 55 homolog from Drosophila willistoni (Fruit fly).